Here is a 61-residue protein sequence, read N- to C-terminus: Small ribosomal subunit protein uS14 (61 aa).

Residues cysteine 24, cysteine 27, cysteine 40, and cysteine 43 each coordinate Zn(2+).

This sequence belongs to the universal ribosomal protein uS14 family. Zinc-binding uS14 subfamily. As to quaternary structure, part of the 30S ribosomal subunit. Contacts proteins S3 and S10. The cofactor is Zn(2+).

In terms of biological role, binds 16S rRNA, required for the assembly of 30S particles and may also be responsible for determining the conformation of the 16S rRNA at the A site. In Brevibacillus brevis (strain 47 / JCM 6285 / NBRC 100599), this protein is Small ribosomal subunit protein uS14.